Consider the following 182-residue polypeptide: Peptidyl-prolyl cis-trans isomerase ssp-1 (182 aa).

The region spanning 7 to 41 (TGLPEDWEVRHSQSKNLPYYFNSATKTSRWEPPSG) is the WW domain. Residues 71–182 (QGKIRCAHLL…SGLHLIERLE (112 aa)) form the PpiC domain.

The catalysed reaction is [protein]-peptidylproline (omega=180) = [protein]-peptidylproline (omega=0). In terms of biological role, site-specific PPIase with respect to the amino acid N-terminal to the proline residue. Peptides with glutamate, phosphoserine, or phosphothreonine in the -1 position are the best substrates. It is not only able to isomerize small peptides but is also active in protein folding. This chain is Peptidyl-prolyl cis-trans isomerase ssp-1 (ssp-1), found in Neurospora crassa (strain ATCC 24698 / 74-OR23-1A / CBS 708.71 / DSM 1257 / FGSC 987).